Reading from the N-terminus, the 352-residue chain is DNA polymerase IV (352 aa).

The region spanning 6 to 186 (IIHIDMDAFY…LPLGKIPGAG (181 aa)) is the UmuC domain. Mg(2+)-binding residues include aspartate 10 and aspartate 104. Glutamate 105 is an active-site residue.

The protein belongs to the DNA polymerase type-Y family. In terms of assembly, monomer. The cofactor is Mg(2+).

The protein localises to the cytoplasm. It carries out the reaction DNA(n) + a 2'-deoxyribonucleoside 5'-triphosphate = DNA(n+1) + diphosphate. Poorly processive, error-prone DNA polymerase involved in untargeted mutagenesis. Copies undamaged DNA at stalled replication forks, which arise in vivo from mismatched or misaligned primer ends. These misaligned primers can be extended by PolIV. Exhibits no 3'-5' exonuclease (proofreading) activity. May be involved in translesional synthesis, in conjunction with the beta clamp from PolIII. In Neisseria gonorrhoeae (strain ATCC 700825 / FA 1090), this protein is DNA polymerase IV.